The following is a 358-amino-acid chain: Probable arabinan endo-1,5-alpha-L-arabinosidase B (358 aa).

Positions 1-16 (MVLVATLFSLFTVSLC) are cleaved as a signal peptide. The active-site Proton acceptor is the aspartate 39. The N-linked (GlcNAc...) asparagine glycan is linked to asparagine 194. Residues 202–227 (HLAKHPKTERVNSQDQNPDPLCRDSS) form a disordered region. Glutamate 233 (proton donor) is an active-site residue.

The protein belongs to the glycosyl hydrolase 43 family.

The protein localises to the secreted. It catalyses the reaction Endohydrolysis of (1-&gt;5)-alpha-arabinofuranosidic linkages in (1-&gt;5)-arabinans.. It functions in the pathway glycan metabolism; L-arabinan degradation. Endo-1,5-alpha-L-arabinanase involved in degradation of pectin. Its preferred substrate is linear 1,5-alpha-L-arabinan. The chain is Probable arabinan endo-1,5-alpha-L-arabinosidase B (abnB) from Aspergillus flavus (strain ATCC 200026 / FGSC A1120 / IAM 13836 / NRRL 3357 / JCM 12722 / SRRC 167).